The sequence spans 177 residues: Large ribosomal subunit protein uL6 (177 aa).

It belongs to the universal ribosomal protein uL6 family. In terms of assembly, part of the 50S ribosomal subunit.

This protein binds to the 23S rRNA, and is important in its secondary structure. It is located near the subunit interface in the base of the L7/L12 stalk, and near the tRNA binding site of the peptidyltransferase center. This Albidiferax ferrireducens (strain ATCC BAA-621 / DSM 15236 / T118) (Rhodoferax ferrireducens) protein is Large ribosomal subunit protein uL6.